Reading from the N-terminus, the 505-residue chain is Putative F-box protein At1g58310 (505 aa).

Positions 7 to 55 (RDIISGLPDSLLCHILSFLNTKEAASTSVLAKKWRYLFASVPNLDFDDS) constitute an F-box domain.

The chain is Putative F-box protein At1g58310 from Arabidopsis thaliana (Mouse-ear cress).